The primary structure comprises 323 residues: Beta-ketoacyl-[acyl-carrier-protein] synthase III (323 aa).

Residues Cys-113 and His-250 contribute to the active site. The ACP-binding stretch occupies residues 251–255; that stretch reads QANKR. Asn-280 is a catalytic residue.

This sequence belongs to the thiolase-like superfamily. FabH family. Homodimer.

It is found in the cytoplasm. It carries out the reaction malonyl-[ACP] + acetyl-CoA + H(+) = 3-oxobutanoyl-[ACP] + CO2 + CoA. The protein operates within lipid metabolism; fatty acid biosynthesis. Functionally, catalyzes the condensation reaction of fatty acid synthesis by the addition to an acyl acceptor of two carbons from malonyl-ACP. Catalyzes the first condensation reaction which initiates fatty acid synthesis and may therefore play a role in governing the total rate of fatty acid production. Possesses both acetoacetyl-ACP synthase and acetyl transacylase activities. Its substrate specificity determines the biosynthesis of branched-chain and/or straight-chain of fatty acids. The protein is Beta-ketoacyl-[acyl-carrier-protein] synthase III of Brucella suis (strain ATCC 23445 / NCTC 10510).